The following is a 1016-amino-acid chain: Coiled-coil domain-containing protein 57 (1016 aa).

The tract at residues M1–Q503 is centrosomal targeting domain. 3 coiled-coil regions span residues L14 to T607, S676 to K700, and V748 to M775. Disordered regions lie at residues Q500–S519 and H549–P573. The tract at residues P604–D1016 is microtubule binding domain. 2 disordered regions span residues A781–S921 and G933–D1016. 2 stretches are compositionally biased toward polar residues: residues Q846–P859 and S934–S945.

In terms of assembly, interacts with CEP63; the interaction is required for their location to proximal end of centrioles. Interacts with microtubules.

Its subcellular location is the cytoplasm. It is found in the cytoskeleton. It localises to the microtubule organizing center. The protein resides in the centrosome. The protein localises to the centriolar satellite. Its subcellular location is the centriole. It is found in the spindle. In terms of biological role, pleiotropic regulator of centriole duplication, mitosis, and ciliogenesis. Critical interface between centrosome and microtubule-mediated cellular processes. Centriole duplication protein required for recruitment of CEP63, CEP152, and PLK4 to the centrosome. Independent of its centrosomal targeting, localizes to and interacts with microtubules and regulates microtubule nucleation, stability, and mitotic progression. This chain is Coiled-coil domain-containing protein 57, found in Mus musculus (Mouse).